The sequence spans 356 residues: S-adenosylmethionine:tRNA ribosyltransferase-isomerase (356 aa).

The protein belongs to the QueA family. Monomer.

It localises to the cytoplasm. It carries out the reaction 7-aminomethyl-7-carbaguanosine(34) in tRNA + S-adenosyl-L-methionine = epoxyqueuosine(34) in tRNA + adenine + L-methionine + 2 H(+). Its pathway is tRNA modification; tRNA-queuosine biosynthesis. Transfers and isomerizes the ribose moiety from AdoMet to the 7-aminomethyl group of 7-deazaguanine (preQ1-tRNA) to give epoxyqueuosine (oQ-tRNA). This Yersinia pseudotuberculosis serotype IB (strain PB1/+) protein is S-adenosylmethionine:tRNA ribosyltransferase-isomerase.